The following is a 294-amino-acid chain: Ribosomal RNA small subunit methyltransferase H (294 aa).

S-adenosyl-L-methionine is bound by residues 31–33, aspartate 49, phenylalanine 76, aspartate 97, and glutamine 104; that span reads GGY.

Belongs to the methyltransferase superfamily. RsmH family.

The protein resides in the cytoplasm. The enzyme catalyses cytidine(1402) in 16S rRNA + S-adenosyl-L-methionine = N(4)-methylcytidine(1402) in 16S rRNA + S-adenosyl-L-homocysteine + H(+). Specifically methylates the N4 position of cytidine in position 1402 (C1402) of 16S rRNA. The protein is Ribosomal RNA small subunit methyltransferase H of Wolbachia pipientis subsp. Culex pipiens (strain wPip).